The sequence spans 254 residues: MTTPPRGPDGRPLKVRVKKSRGRTTSSQKWLQRQLNDPYVARAKREGWRSRAAFKLIEMDEKARLLKRGMRIVDLGAAPGGWSQVAAKKIGLEEGLGKIVAIDLLEIEPIPGVAFAQMDFLAPDAPERLIAMLGGQADLVMSDMAANATGHKKTDHLRIVGLVELAVEFARQVLAPGGTFLAKVIQGGMEATLLADLKRDFTQVRHVKPAASRADSAELYVLATGFRGEADRAETDDAGTDGTGTAEAQAPRDQ.

The segment at 1–28 (MTTPPRGPDGRPLKVRVKKSRGRTTSSQ) is disordered. Basic residues predominate over residues 13-22 (LKVRVKKSRG). S-adenosyl-L-methionine contacts are provided by Gly-80, Trp-82, Asp-103, Asp-119, and Asp-143. Lys-183 acts as the Proton acceptor in catalysis. The interval 231-254 (DRAETDDAGTDGTGTAEAQAPRDQ) is disordered.

Belongs to the class I-like SAM-binding methyltransferase superfamily. RNA methyltransferase RlmE family.

Its subcellular location is the cytoplasm. It carries out the reaction uridine(2552) in 23S rRNA + S-adenosyl-L-methionine = 2'-O-methyluridine(2552) in 23S rRNA + S-adenosyl-L-homocysteine + H(+). In terms of biological role, specifically methylates the uridine in position 2552 of 23S rRNA at the 2'-O position of the ribose in the fully assembled 50S ribosomal subunit. The polypeptide is Ribosomal RNA large subunit methyltransferase E (Xanthobacter autotrophicus (strain ATCC BAA-1158 / Py2)).